The chain runs to 438 residues: Putative F-box/FBD/LRR-repeat protein At5g44950 (438 aa).

The F-box domain occupies 3-49 (RDRISELPDGLLNHILMYLHIEESIRTSVLSSRWRKLWLKVPGLDVN). LRR repeat units lie at residues 246-275 (LSSLVKIDLDTEFNLKFGLGSPLEPEDLTK) and 286-310 (ISSVKHMIISHPTLEVLYRYSKIGQ). One can recognise an FBD domain in the interval 355–407 (PEQIDFTNLPRCLISTLEYVEIKQLTMREESGIKLVKYFLENSAVLKKLTLSF).

The protein is Putative F-box/FBD/LRR-repeat protein At5g44950 of Arabidopsis thaliana (Mouse-ear cress).